Reading from the N-terminus, the 163-residue chain is Nucleotide-binding protein YajQ (163 aa).

The protein belongs to the YajQ family.

Nucleotide-binding protein. The polypeptide is Nucleotide-binding protein YajQ (Shigella dysenteriae serotype 1 (strain Sd197)).